A 3029-amino-acid polypeptide reads, in one-letter code: Polycystin-1-related protein (3029 aa).

A signal peptide spans 1-21 (MAKHLYLAFSLILVPFLVSKA). Residues 22 to 1685 (KQTSNGEVPW…RDTDKLKNSP (1664 aa)) lie on the Extracellular side of the membrane. The 93-residue stretch at 29 to 121 (VPWLVGCYRY…KNVASVYSTA (93 aa)) folds into the WSC domain. 2 PKD domains span residues 364–450 (EGHC…IKGV) and 546–634 (DHLF…PECY). The region spanning 633–1476 (CYTRGVAIVG…NPYFSDMNHT (844 aa)) is the REJ domain. 3 disordered regions span residues 754 to 773 (RKGP…HPDE), 909 to 931 (CPSD…SNSP), and 989 to 1051 (TSAI…PNKP). The segment covering 918 to 931 (VTPSTTPMTDSNSP) has biased composition (polar residues). Over residues 997–1013 (SGDVDDDEVNNDNDDDS) the composition is skewed to acidic residues. Positions 1020-1047 (TLPTPLSMTNANSVNKPIITTDTPSFNK) are enriched in polar residues. The region spanning 1525-1671 (RNVHVINQTA…GFIQPPNSLH (147 aa)) is the GAIN-B domain. 2 disulfide bridges follow: C1624-C1651 and C1639-C1653. Positions 1624 to 1671 (CFYWNKRGKHWASDGCRLEKSINHTLVCRCNHLTAFSGGFIQPPNSLH) are GPS. The helical transmembrane segment at 1686–1706 (LTMVLVISILVMYFLLLGFCV) threads the bilayer. The Cytoplasmic segment spans residues 1707 to 1895 (KADRHDKKKL…SYSRFTRAQR (189 aa)). The PLAT domain occupies 1733-1851 (SRFQLSVQTG…GNGKVECELF (119 aa)). A helical transmembrane segment spans residues 1896–1916 (LSCCLSLLLSFLCVNIAWYRP). Residues 1917–1933 (KIEVTEVLGVLDVSANS) lie on the Extracellular side of the membrane. Residues 1934–1954 (IMIGVLGSLMVLPVNFLWIFF) form a helical membrane-spanning segment. Residues 1955-2101 (FRYSRRSLSR…YRSKFSLPHG (147 aa)) are Cytoplasmic-facing. The chain crosses the membrane as a helical span at residues 2102 to 2122 (FVYVAWFGCLITGTVTSAITI). Over 2123 to 2140 (WYGLSFGWDLSVHWFQSL) the chain is Extracellular. The chain crosses the membrane as a helical span at residues 2141-2161 (VFSLLESLLLSQPIMVLAFIF). The Cytoplasmic portion of the chain corresponds to 2162–2250 (YMSHKTKSGK…SLKNRVLRNY (89 aa)). Residues 2251 to 2271 (VVELFVFIMFFVVTCALVFSV) form a helical membrane-spanning segment. The Extracellular segment spans residues 2272-2462 (ADPDVYHLNQ…GYSYFIRFTK (191 aa)). Residues 2463–2483 (LLFVVFFLYLLQHEFFLALKM) form a helical membrane-spanning segment. At 2484–2496 (TFSYFTNFWRVYQ) the chain is on the cytoplasmic side. Residues 2497–2517 (LLTIAISSACIVSYIHWSLSL) traverse the membrane as a helical segment. The Extracellular segment spans residues 2518 to 2538 (YALLREVETERQSRVFYLSRQ). A helical membrane pass occupies residues 2539 to 2559 (ISWSQGFLQASYSLLLFLLLI). Topologically, residues 2560–2586 (RCLHLLRPFRFVRHFGRILSTSISSLL) are cytoplasmic. A helical membrane pass occupies residues 2587–2607 (ACWVFGFILVVAFAHPGYLLF). The Extracellular portion of the chain corresponds to 2608–2651 (GSVHSSFKSFGDAFLLVTSFFRLEGVARYQDFALEEQTLLLSTY). Residues 2652 to 2672 (FALFLIGFCVIVRGSTAAVVL) traverse the membrane as a helical segment. The Cytoplasmic segment spans residues 2673–3029 (HGIRCLGKRR…PVGQRVVSAM (357 aa)). The tract at residues 2704–2726 (KKPKKPRPNSVSDLEETDDEDDL) is disordered. Over residues 2716 to 2726 (DLEETDDEDDL) the composition is skewed to acidic residues.

Belongs to the polycystin family. As to quaternary structure, heterodimer of 2 chains generated by proteolytic processing; the large extracellular N-terminal fragment and the membrane-bound C-terminal fragment predominantly remain associated and non-covalently linked. In terms of processing, autoproteolytically processed at the GPS region of the GAIN-B domain; this cleavage modulates receptor activity. In terms of tissue distribution, component of the acid-insoluble and acid-soluble organic matrix of the aragonitic skeleton (at protein level).

The protein localises to the membrane. The protein is Polycystin-1-related protein of Acropora millepora (Staghorn coral).